We begin with the raw amino-acid sequence, 66 residues long: Large ribosomal subunit protein bL35 (66 aa).

A compositionally biased stretch (basic residues) spans 1 to 16; it reads MPKMKTHKGSAKRFKK. The segment at 1–24 is disordered; the sequence is MPKMKTHKGSAKRFKKTGTGQLKR.

It belongs to the bacterial ribosomal protein bL35 family.

The protein is Large ribosomal subunit protein bL35 of Anoxybacillus flavithermus (strain DSM 21510 / WK1).